A 137-amino-acid chain; its full sequence is Large ribosomal subunit protein uL14A (137 aa).

An N-acetylserine modification is found at Ser-2. Residues Lys-106 and Lys-110 each carry the N6,N6-dimethyllysine; by RKM1 modification.

This sequence belongs to the universal ribosomal protein uL14 family. As to quaternary structure, component of the large ribosomal subunit (LSU). Mature yeast ribosomes consist of a small (40S) and a large (60S) subunit. The 40S small subunit contains 1 molecule of ribosomal RNA (18S rRNA) and 33 different proteins (encoded by 57 genes). The large 60S subunit contains 3 rRNA molecules (25S, 5.8S and 5S rRNA) and 46 different proteins (encoded by 81 genes). Methylated by RKM1 at 2 different sites, but it is unclear which are the 2 methylated residues among Lys-40, Lys-106 and/or Lys-110.

The protein localises to the cytoplasm. In terms of biological role, component of the ribosome, a large ribonucleoprotein complex responsible for the synthesis of proteins in the cell. The small ribosomal subunit (SSU) binds messenger RNAs (mRNAs) and translates the encoded message by selecting cognate aminoacyl-transfer RNA (tRNA) molecules. The large subunit (LSU) contains the ribosomal catalytic site termed the peptidyl transferase center (PTC), which catalyzes the formation of peptide bonds, thereby polymerizing the amino acids delivered by tRNAs into a polypeptide chain. The nascent polypeptides leave the ribosome through a tunnel in the LSU and interact with protein factors that function in enzymatic processing, targeting, and the membrane insertion of nascent chains at the exit of the ribosomal tunnel. This chain is Large ribosomal subunit protein uL14A, found in Saccharomyces cerevisiae (strain ATCC 204508 / S288c) (Baker's yeast).